The chain runs to 231 residues: PIAGSMVLAAILLKLGGYGIIRMMQVLPTTKTEMFLPFLVLALWGAILANLTCLQQTDLKSLIAYSSISHMGLVVAAIIIQTPWGLSGAMALMVAHGFTSSSLFCLANTTYERTHTRILILTRGFHNILPMATTWWLLANLLNIATPPSMNFTGELLIMSALFNWCPTTIILLGLSMLITASYSLHMFLSTQMGPTALSNQTAPMHSREHLLITLHLIPLMLISMKPELVI.

6 helical membrane passes run 1–21 (PIAGSMVLAAILLKLGGYGII), 34–54 (MFLPFLVLALWGAILANLTCL), 63–85 (IAYSSISHMGLVVAAIIIQTPWG), 89–111 (AMALMVAHGFTSSSLFCLANTTY), 128–148 (ILPMATTWWLLANLLNIATPP), and 156–176 (LLIMSALFNWCPTTIILLGLS).

This sequence belongs to the complex I subunit 4 family.

The protein localises to the mitochondrion membrane. The enzyme catalyses a ubiquinone + NADH + 5 H(+)(in) = a ubiquinol + NAD(+) + 4 H(+)(out). Functionally, core subunit of the mitochondrial membrane respiratory chain NADH dehydrogenase (Complex I) that is believed to belong to the minimal assembly required for catalysis. Complex I functions in the transfer of electrons from NADH to the respiratory chain. The immediate electron acceptor for the enzyme is believed to be ubiquinone. The sequence is that of NADH-ubiquinone oxidoreductase chain 4 (MT-ND4) from Bothriechis lateralis (Side-striped palm pitviper).